The chain runs to 92 residues: UPF0223 protein SSP1692 (92 aa).

This sequence belongs to the UPF0223 family.

The protein is UPF0223 protein SSP1692 of Staphylococcus saprophyticus subsp. saprophyticus (strain ATCC 15305 / DSM 20229 / NCIMB 8711 / NCTC 7292 / S-41).